The following is a 457-amino-acid chain: Argininosuccinate lyase (457 aa).

This sequence belongs to the lyase 1 family. Argininosuccinate lyase subfamily.

Its subcellular location is the cytoplasm. It catalyses the reaction 2-(N(omega)-L-arginino)succinate = fumarate + L-arginine. It functions in the pathway amino-acid biosynthesis; L-arginine biosynthesis; L-arginine from L-ornithine and carbamoyl phosphate: step 3/3. The chain is Argininosuccinate lyase from Yersinia pseudotuberculosis serotype IB (strain PB1/+).